A 129-amino-acid chain; its full sequence is uncharacterized protein (129 aa).

One can recognise an HIT domain in the interval 3–109 (IFCKIINGEI…IPRYEGDGEV (107 aa)). The Histidine triad motif motif lies at 94–98 (HVHFH).

This is an uncharacterized protein from Methanocaldococcus jannaschii (strain ATCC 43067 / DSM 2661 / JAL-1 / JCM 10045 / NBRC 100440) (Methanococcus jannaschii).